A 150-amino-acid chain; its full sequence is UPF0756 membrane protein Asuc_1151 (150 aa).

Helical transmembrane passes span 1–21 (MSLHFNSIGFLLVVLALLGVL), 52–72 (YGLNIGVIILTIGVLSPIVAG), 82–102 (LLHWKMFLSLVVGMLVAWLAG), and 123–143 (ILGVGLLGGIPVGPLIAAGIL).

Belongs to the UPF0756 family.

The protein resides in the cell membrane. The protein is UPF0756 membrane protein Asuc_1151 of Actinobacillus succinogenes (strain ATCC 55618 / DSM 22257 / CCUG 43843 / 130Z).